A 402-amino-acid polypeptide reads, in one-letter code: DNA polymerase IV (402 aa).

The UmuC domain occupies 5–187; sequence ILLADMNSFY…LPVRELFGVG (183 aa). Mg(2+) is bound by residues D9 and D105. E106 is an active-site residue.

It belongs to the DNA polymerase type-Y family. Monomer. Mg(2+) serves as cofactor.

Its subcellular location is the cytoplasm. The catalysed reaction is DNA(n) + a 2'-deoxyribonucleoside 5'-triphosphate = DNA(n+1) + diphosphate. Its function is as follows. Poorly processive, error-prone DNA polymerase involved in untargeted mutagenesis. Copies undamaged DNA at stalled replication forks, which arise in vivo from mismatched or misaligned primer ends. These misaligned primers can be extended by PolIV. Exhibits no 3'-5' exonuclease (proofreading) activity. May be involved in translesional synthesis, in conjunction with the beta clamp from PolIII. The protein is DNA polymerase IV of Pelotomaculum thermopropionicum (strain DSM 13744 / JCM 10971 / SI).